Reading from the N-terminus, the 378-residue chain is 1-acyl-sn-glycerol-3-phosphate acyltransferase delta (378 aa).

The chain crosses the membrane as a helical span at residues 11–31; it reads FLCHLVFCYVFIASGLIVNAI. Positions 96 to 101 match the HXXXXD motif motif; the sequence is HKFEID. 3 helical membrane-spanning segments follow: residues 125-145, 311-331, and 338-358; these read ELAYVPIIGWMWYFVEMIFCT, WLFWASLLLYPFFQFLVSMVS, and LASLVLIFCMASMGVRWMIGV.

The protein belongs to the 1-acyl-sn-glycerol-3-phosphate acyltransferase family. As to expression, expressed at a high levels in the brain, at intermediate or low levels in skeletal muscles, gut, kidney, spleen and lung. Barely detectable in heart and liver.

It localises to the endoplasmic reticulum membrane. It catalyses the reaction a 1-acyl-sn-glycero-3-phosphate + an acyl-CoA = a 1,2-diacyl-sn-glycero-3-phosphate + CoA. It carries out the reaction (4Z,7Z,10Z,13Z,16Z,19Z)-docosahexaenoyl-CoA + 1-hexadecanoyl-sn-glycero-3-phosphate = 1-hexadecanoyl-2-(4Z,7Z,10Z,13Z,16Z,19Z-docosahexaenoyl)-sn-glycero-3-phosphate + CoA. The catalysed reaction is 1-octadecanoyl-sn-glycero-3-phosphate + (9Z,12Z)-octadecadienoyl-CoA = 1-octadecanoyl-2-(9Z,12Z-octadecadienoyl)-sn-glycero-3-phosphate + CoA. The enzyme catalyses 1-octadecanoyl-sn-glycero-3-phosphate + (4Z,7Z,10Z,13Z,16Z,19Z)-docosahexaenoyl-CoA = 1-octadecanoyl-2-(4Z,7Z,10Z,13Z,16Z,19Z-docosahexaenoyl)-sn-glycero-3-phosphate + CoA. It catalyses the reaction (4Z,7Z,10Z,13Z,16Z,19Z)-docosahexaenoyl-CoA + 1-(9Z-octadecenoyl)-sn-glycero-3-phosphate = 1-(9Z-octadecenoyl)-2-(4Z,7Z,10Z,13Z,16Z,19Z-docosahexaenoyl)-sn-glycero-3-phosphate + CoA. The protein operates within phospholipid metabolism; CDP-diacylglycerol biosynthesis; CDP-diacylglycerol from sn-glycerol 3-phosphate: step 2/3. Converts 1-acyl-sn-glycerol-3-phosphate (lysophosphatidic acid or LPA) into 1,2-diacyl-sn-glycerol-3-phosphate (phosphatidic acid or PA) by incorporating an acyl moiety at the sn-2 position of the glycerol backbone. Exhibits high acyl-CoA specificity for polyunsaturated fatty acyl-CoA, especially docosahexaenoyl-CoA (22:6-CoA, DHA-CoA). The chain is 1-acyl-sn-glycerol-3-phosphate acyltransferase delta (Agpat4) from Mus musculus (Mouse).